A 283-amino-acid chain; its full sequence is ATP phosphoribosyltransferase (283 aa).

The protein belongs to the ATP phosphoribosyltransferase family. Long subfamily. Mg(2+) serves as cofactor.

It is found in the cytoplasm. The catalysed reaction is 1-(5-phospho-beta-D-ribosyl)-ATP + diphosphate = 5-phospho-alpha-D-ribose 1-diphosphate + ATP. Its pathway is amino-acid biosynthesis; L-histidine biosynthesis; L-histidine from 5-phospho-alpha-D-ribose 1-diphosphate: step 1/9. Feedback inhibited by histidine. Catalyzes the condensation of ATP and 5-phosphoribose 1-diphosphate to form N'-(5'-phosphoribosyl)-ATP (PR-ATP). Has a crucial role in the pathway because the rate of histidine biosynthesis seems to be controlled primarily by regulation of HisG enzymatic activity. This Ignicoccus hospitalis (strain KIN4/I / DSM 18386 / JCM 14125) protein is ATP phosphoribosyltransferase.